The following is a 131-amino-acid chain: Fluoride-specific ion channel FluC 2 (131 aa).

4 helical membrane-spanning segments follow: residues 5–25 (FGVAVGGALGALARYGVSLLV), 39–59 (LATLLVNVLGSFLLAFITTLA), 70–90 (LAVGTGFIGALTTFSTFAWES), and 104–124 (LYVLGNLVLGYAAVLLGRALA). Positions 78 and 81 each coordinate Na(+).

Belongs to the fluoride channel Fluc/FEX (TC 1.A.43) family.

It localises to the cell membrane. The enzyme catalyses fluoride(in) = fluoride(out). Na(+) is not transported, but it plays an essential structural role and its presence is essential for fluoride channel function. Functionally, fluoride-specific ion channel. Important for reducing fluoride concentration in the cell, thus reducing its toxicity. The chain is Fluoride-specific ion channel FluC 2 from Deinococcus geothermalis (strain DSM 11300 / CIP 105573 / AG-3a).